A 70-amino-acid chain; its full sequence is Venom antimicrobial peptide-6 (70 aa).

Positions Met1–Ala23 are cleaved as a signal peptide. At Phe36 the chain carries Phenylalanine amide. A propeptide spanning residues Ser40 to Tyr70 is cleaved from the precursor.

The protein belongs to the non-disulfide-bridged peptide (NDBP) superfamily. Short antimicrobial peptide (group 4) family. Expressed by the venom gland.

The protein localises to the secreted. The protein resides in the target cell membrane. Functionally, amphipathic peptide that exhibits extensive cytolytic activities against both prokaryotic and eukaryotic cells. Is more potent against Gram-positive bacteria (lethal concentration (LC)=0.25-2.9 uM) than against Gram-negative bacteria (LC=6.2-&gt;50 uM), and fungi ((LC)=14.1-&gt;50 uM). Shows hemolytic activity against rabbit erythrocytes (37.7% of inhibition at 6.25 uM) and cytolysis against rat dorsal root ganglions. In vivo, intravenous injection into mice tail provokes uncomfortable symptoms with a death rate of 12.5%. This Mesobuthus eupeus (Lesser Asian scorpion) protein is Venom antimicrobial peptide-6.